Consider the following 511-residue polypeptide: 2-isopropylmalate synthase (511 aa).

One can recognise a Pyruvate carboxyltransferase domain in the interval 6–269; it reads IIIFDTTLRD…YTDIKCENIF (264 aa). Asp-15, His-203, His-205, and Asn-239 together coordinate Mn(2+). The tract at residues 394 to 511 is regulatory domain; that stretch reads VLEKLSVISG…SLKVEERKMA (118 aa).

The protein belongs to the alpha-IPM synthase/homocitrate synthase family. LeuA type 1 subfamily. In terms of assembly, homodimer. The cofactor is Mn(2+).

The protein resides in the cytoplasm. It carries out the reaction 3-methyl-2-oxobutanoate + acetyl-CoA + H2O = (2S)-2-isopropylmalate + CoA + H(+). It participates in amino-acid biosynthesis; L-leucine biosynthesis; L-leucine from 3-methyl-2-oxobutanoate: step 1/4. Functionally, catalyzes the condensation of the acetyl group of acetyl-CoA with 3-methyl-2-oxobutanoate (2-ketoisovalerate) to form 3-carboxy-3-hydroxy-4-methylpentanoate (2-isopropylmalate). The chain is 2-isopropylmalate synthase from Campylobacter jejuni subsp. jejuni serotype O:2 (strain ATCC 700819 / NCTC 11168).